Consider the following 117-residue polypeptide: Protein GL2-INTERACTING REPRESSOR 2 (117 aa).

The tract at residues Met-1–Thr-56 is disordered. An EAR motif is present at residues Lys-10–Leu-15. Residues Arg-31 to Thr-49 show a composition bias toward low complexity.

Interacts with GL2. Interacts with TPL.

It localises to the nucleus. In terms of biological role, acts as a negative regulator of root hair development redundantly with GIR1. GIR1 and GIR2 may function as adapter proteins that associate with GL2 and participate in the control of root hair formation. GIR1 and GIR2 may function as adapter proteins that associate with TPL and participate in the repression of root gene expression. This is Protein GL2-INTERACTING REPRESSOR 2 from Arabidopsis thaliana (Mouse-ear cress).